The primary structure comprises 402 residues: LIM homeobox transcription factor 1-beta (402 aa).

LIM zinc-binding domains follow at residues 56 to 106 (CEGC…CKQD) and 115 to 168 (CSGC…CKGD). Disordered regions lie at residues 176–229 (LSSV…LTTQ) and 326–346 (PYGS…PGDH). The segment at residues 219–278 (PKRPRTILTTQQRRAFKASFEVSSKPCRKVRETLAAETGLSVRVVQVWFQNQRAKMKKLA) is a DNA-binding region (homeobox). Residues 326 to 338 (PYGSSDPFQQGLT) show a composition bias toward polar residues.

As to quaternary structure, interacts with DHX9. In terms of tissue distribution, expressed in most tissues. Highest levels in testis, thyroid, duodenum, skeletal muscle, and pancreatic islets.

The protein resides in the nucleus. Its function is as follows. Transcription factor involved in the regulation of podocyte-expressed genes. Essential for the specification of dorsal limb fate at both the zeugopodal and autopodal levels. The sequence is that of LIM homeobox transcription factor 1-beta (LMX1B) from Homo sapiens (Human).